The chain runs to 127 residues: Large ribosomal subunit protein bL17 (127 aa).

This sequence belongs to the bacterial ribosomal protein bL17 family. In terms of assembly, part of the 50S ribosomal subunit. Contacts protein L32.

In Levilactobacillus brevis (strain ATCC 367 / BCRC 12310 / CIP 105137 / JCM 1170 / LMG 11437 / NCIMB 947 / NCTC 947) (Lactobacillus brevis), this protein is Large ribosomal subunit protein bL17.